The following is a 169-amino-acid chain: Small ribosomal subunit protein uS13c (169 aa).

The N-terminal 47 residues, 1 to 47 (MAQMVAMPVAHSLSLICNWAKSNPLSRNTLALPASNTPNKQSLSIRC), are a transit peptide targeting the chloroplast.

The protein belongs to the universal ribosomal protein uS13 family. In terms of assembly, part of the 30S ribosomal subunit.

It is found in the plastid. The protein localises to the chloroplast. Located at the top of the head of the 30S subunit, it contacts several helices of the 16S rRNA. In Arabidopsis thaliana (Mouse-ear cress), this protein is Small ribosomal subunit protein uS13c (RPS13).